Consider the following 237-residue polypeptide: Purine nucleoside phosphorylase DeoD-type (237 aa).

Position 4 (His-4) interacts with a purine D-ribonucleoside. Residues Gly-20, Arg-24, Arg-43, and 87–90 (RVGT) each bind phosphate. A purine D-ribonucleoside-binding positions include 180–182 (EME) and 204–205 (SD). Asp-205 serves as the catalytic Proton donor.

The protein belongs to the PNP/UDP phosphorylase family. In terms of assembly, homohexamer; trimer of homodimers.

It carries out the reaction a purine D-ribonucleoside + phosphate = a purine nucleobase + alpha-D-ribose 1-phosphate. The catalysed reaction is a purine 2'-deoxy-D-ribonucleoside + phosphate = a purine nucleobase + 2-deoxy-alpha-D-ribose 1-phosphate. In terms of biological role, catalyzes the reversible phosphorolytic breakdown of the N-glycosidic bond in the beta-(deoxy)ribonucleoside molecules, with the formation of the corresponding free purine bases and pentose-1-phosphate. The protein is Purine nucleoside phosphorylase DeoD-type of Streptococcus suis (strain 98HAH33).